Here is a 115-residue protein sequence, read N- to C-terminus: MVAAKKTKKSLESINSRLQLVMKSGKYVLGYKQSLKMIRQGKAKLVILANNCPALRKSEIEYYAMLAKTGVHHYSGNNIELGTACGKYYRVCTLSIIDPGDSDIIRSMPEQTGEK.

Phosphoserine occurs at positions 10 and 16. The residue at position 26 (lysine 26) is an N6-acetyllysine; alternate. Residue lysine 26 forms a Glycyl lysine isopeptide (Lys-Gly) (interchain with G-Cter in SUMO2); alternate linkage.

This sequence belongs to the eukaryotic ribosomal protein eL30 family. As to quaternary structure, component of the large ribosomal subunit.

Its subcellular location is the cytoplasm. In terms of biological role, component of the large ribosomal subunit. The ribosome is a large ribonucleoprotein complex responsible for the synthesis of proteins in the cell. The protein is Large ribosomal subunit protein eL30 (RPL30) of Oryctolagus cuniculus (Rabbit).